The sequence spans 91 residues: Putative defensin-like protein 145 (91 aa).

The first 26 residues, 1–26 (MNKNIIFSFTVLTLFVIFVQVTGVIG), serve as a signal peptide directing secretion. Asparagine 35 and asparagine 68 each carry an N-linked (GlcNAc...) asparagine glycan. Cystine bridges form between cysteine 39/cysteine 84, cysteine 52/cysteine 74, cysteine 57/cysteine 78, and cysteine 61/cysteine 80.

Belongs to the DEFL family.

It is found in the secreted. The polypeptide is Putative defensin-like protein 145 (LCR2) (Arabidopsis thaliana (Mouse-ear cress)).